The following is a 247-amino-acid chain: 1-(5-phosphoribosyl)-5-[(5-phosphoribosylamino)methylideneamino] imidazole-4-carboxamide isomerase (247 aa).

Aspartate 8 acts as the Proton acceptor in catalysis. Catalysis depends on aspartate 130, which acts as the Proton donor.

This sequence belongs to the HisA/HisF family.

It localises to the cytoplasm. It carries out the reaction 1-(5-phospho-beta-D-ribosyl)-5-[(5-phospho-beta-D-ribosylamino)methylideneamino]imidazole-4-carboxamide = 5-[(5-phospho-1-deoxy-D-ribulos-1-ylimino)methylamino]-1-(5-phospho-beta-D-ribosyl)imidazole-4-carboxamide. Its pathway is amino-acid biosynthesis; L-histidine biosynthesis; L-histidine from 5-phospho-alpha-D-ribose 1-diphosphate: step 4/9. In Leptospira biflexa serovar Patoc (strain Patoc 1 / Ames), this protein is 1-(5-phosphoribosyl)-5-[(5-phosphoribosylamino)methylideneamino] imidazole-4-carboxamide isomerase.